Here is a 935-residue protein sequence, read N- to C-terminus: Dual 3',5'-cyclic-AMP and -GMP phosphodiesterase 11A (935 aa).

Residues 41–125 (RHSSGQGASD…ASQKELRKSF (85 aa)) form a disordered region. Over residues 54–69 (ALAGASSLAQSSARGS) the composition is skewed to low complexity. Phosphoserine occurs at positions 162, 163, and 239. GAF domains are found at residues 217-370 (DLTS…GIAI) and 402-558 (DLEK…GLGI). Ser424 provides a ligand contact to 3',5'-cyclic GMP. The PDEase domain maps to 588-912 (SKAEVDKFKA…RKWEELHQKR (325 aa)). His664 (proton donor) is an active-site residue. Residues His668, His704, Asp705, and Asp816 each coordinate a divalent metal cation. The segment at 915 to 935 (VSAASPVPSSPSPAVAGEDRL) is disordered.

This sequence belongs to the cyclic nucleotide phosphodiesterase family. Requires a divalent metal cation as cofactor. Isoform 1 is expressed in brain, heart, kidney and liver, but not in prostate. Isoform 2 is specifically expressed in testis. Isoform 3 is expressed in various tissues including brain, lung, skeletal muscle, spleen, testis and prostate.

The protein localises to the cytoplasm. Its subcellular location is the cytosol. It carries out the reaction 3',5'-cyclic GMP + H2O = GMP + H(+). The catalysed reaction is 3',5'-cyclic AMP + H2O = AMP + H(+). Inhibited by 3-isobutyl-1-methylxanthine (IBMX), zaprinast and dipyridamole. cGMP acts as an allosteric activator. Plays a role in signal transduction by regulating the intracellular concentration of cyclic nucleotides cAMP and cGMP. Catalyzes the hydrolysis of both cAMP and cGMP to 5'-AMP and 5'-GMP, respectively. The chain is Dual 3',5'-cyclic-AMP and -GMP phosphodiesterase 11A from Rattus norvegicus (Rat).